A 312-amino-acid polypeptide reads, in one-letter code: Light-independent protochlorophyllide reductase iron-sulfur ATP-binding protein (312 aa).

ATP contacts are provided by residues 55 to 60 (GIGKST) and lysine 84. Residue serine 59 coordinates Mg(2+). 2 residues coordinate [4Fe-4S] cluster: cysteine 140 and cysteine 174. ATP contacts are provided by residues 225-226 (NR) and 249-251 (PDL).

The protein belongs to the NifH/BchL/ChlL family. In terms of assembly, homodimer. Protochlorophyllide reductase is composed of three subunits; BchL, BchN and BchB. Requires [4Fe-4S] cluster as cofactor.

It carries out the reaction chlorophyllide a + oxidized 2[4Fe-4S]-[ferredoxin] + 2 ADP + 2 phosphate = protochlorophyllide a + reduced 2[4Fe-4S]-[ferredoxin] + 2 ATP + 2 H2O. The protein operates within porphyrin-containing compound metabolism; bacteriochlorophyll biosynthesis (light-independent). In terms of biological role, component of the dark-operative protochlorophyllide reductase (DPOR) that uses Mg-ATP and reduced ferredoxin to reduce ring D of protochlorophyllide (Pchlide) to form chlorophyllide a (Chlide). This reaction is light-independent. The L component serves as a unique electron donor to the NB-component of the complex, and binds Mg-ATP. In Rhodopseudomonas palustris (strain HaA2), this protein is Light-independent protochlorophyllide reductase iron-sulfur ATP-binding protein.